Here is a 514-residue protein sequence, read N- to C-terminus: RNA polymerase sigma factor SigA (514 aa).

Over residues 135–159 (AAKKATAKKAAAKKTTAKKTAAKKS) the composition is skewed to basic residues. Residues 135 to 205 (AAKKATAKKA…SDDDEDDAPA (71 aa)) form a disordered region. The interval 281-351 (LLEANLRLVV…TRAMADQART (71 aa)) is sigma-70 factor domain-2. Residues 305–308 (DLIQ) carry the Interaction with polymerase core subunit RpoC motif. The interval 360 to 436 (EVINKLARVQ…DSEAVVPADA (77 aa)) is sigma-70 factor domain-3. The interval 449–502 (VLDTLSEREAGVVSMRFGLTDGQPKTLDEIGKVYGVTRERIRQIESKTMSKLRH) is sigma-70 factor domain-4. The segment at residues 475–494 (LDEIGKVYGVTRERIRQIES) is a DNA-binding region (H-T-H motif).

This sequence belongs to the sigma-70 factor family. RpoD/SigA subfamily. Interacts transiently with the RNA polymerase catalytic core.

The protein resides in the cytoplasm. Sigma factors are initiation factors that promote the attachment of RNA polymerase to specific initiation sites and are then released. This sigma factor is the primary sigma factor during exponential growth. This is RNA polymerase sigma factor SigA from Streptomyces griseus.